The sequence spans 578 residues: Protein O-linked-mannose beta-1,4-N-acetylglucosaminyltransferase 2 (578 aa).

Residues 1-4 (MNIS) lie on the Cytoplasmic side of the membrane. The helical; Signal-anchor for type II membrane protein transmembrane segment at 5 to 25 (AVFSALLVSIMAAVLWKHVKL) threads the bilayer. The Lumenal portion of the chain corresponds to 26 to 578 (LDQFYVIEEE…PFAEVLVCST (553 aa)). Asn98, Asn275, Asn335, Asn451, Asn541, and Asn563 each carry an N-linked (GlcNAc...) asparagine glycan. Positions 484-578 (RESKCQASAQ…PFAEVLVCST (95 aa)) constitute a Fibronectin type-III domain.

Belongs to the glycosyltransferase 61 family.

Its subcellular location is the endoplasmic reticulum membrane. The enzyme catalyses 3-O-(alpha-D-mannosyl)-L-threonyl-[protein] + UDP-N-acetyl-alpha-D-glucosamine = 3-O-(N-acetyl-beta-D-glucosaminyl-(1-&gt;4)-alpha-D-mannosyl)-L-threonyl-[protein] + UDP + H(+). The protein operates within protein modification; protein glycosylation. In terms of biological role, O-linked mannose beta-1,4-N-acetylglucosaminyltransferase that transfers UDP-N-acetyl-D-glucosamine to the 4-position of the mannose to generate N-acetyl-D-glucosamine-beta-1,4-O-D-mannosylprotein. Involved in the biosynthesis of the phosphorylated O-mannosyl trisaccharide (N-acetylgalactosamine-beta-3-N-acetylglucosamine-beta-4-(phosphate-6-)mannose), a carbohydrate structure present in alpha-dystroglycan (DAG1), which is required for binding laminin G-like domain-containing extracellular proteins with high affinity. In Xenopus laevis (African clawed frog), this protein is Protein O-linked-mannose beta-1,4-N-acetylglucosaminyltransferase 2 (pomgnt2).